The chain runs to 434 residues: Evolutionarily conserved signaling intermediate in Toll pathway, mitochondrial (434 aa).

A mitochondrion-targeting transit peptide spans 1–48 (MSWVQVNLLARGLSRGWGSICRTVLSGTPFAQPSLQARGLHCSAVTHK). Residue Lys371 forms a Glycyl lysine isopeptide (Lys-Gly) (interchain with G-Cter in ubiquitin) linkage. The interval 403–434 (TRLEGQSPPHSPPKGPEEDDEAIQAQQRQGQS) is disordered.

This sequence belongs to the ECSIT family. In terms of assembly, interacts with MAP3K1, SMAD4 and TRAF6. Interacts with SMAD1 only after BMP4-treatment. Part of the mitochondrial complex I assembly/MCIA complex that comprises at least the core subunits TMEM126B, NDUFAF1, ECSIT and ACAD9 and complement subunits such as COA1 and TMEM186. Interacts with NDUFAF1. Interacts with ACAD9. Interacts with TRIM59. Interacts with TMEM70 and TMEM242. Interacts (when ubiquitinated) with NF-kappa-B subunits RELA and NFKB1. Interacts with RIGI, IFIT1 and MAVS; these interactions promote RLR-mediated type I IFN induction. Interacts with SQSTM1; this interaction inhibits TLR4 signaling via functional regulation of the TRAF6-ECSIT complex. Interacts with cereblon/CRBN; this interaction inhibits the ubiquitination of ECSIT. Ubiquitinated on Lys-371; leading to translocation in the nucleus together with RELA and NFKB1 and expression of NF-kappa-B-dependent genes.

The protein localises to the cytoplasm. The protein resides in the nucleus. It is found in the mitochondrion. Functionally, adapter protein that plays a role in different signaling pathways including TLRs and IL-1 pathways or innate antiviral induction signaling. Plays a role in the activation of NF-kappa-B by forming a signal complex with TRAF6 and TAK1/MAP3K7 to activate TAK1/MAP3K7 leading to activation of IKKs. Once ubiquitinated, interacts with the dissociated RELA and NFKB1 proteins and translocates to the nucleus where it induces NF-kappa-B-dependent gene expression. Plays a role in innate antiviral immune response by bridging the pattern recognition receptors RIGI and MDA5/IFIT1 to the MAVS complex at the mitochondrion. Promotes proteolytic activation of MAP3K1. Involved in the BMP signaling pathway. Required for normal embryonic development. As part of the MCIA complex, involved in the assembly of the mitochondrial complex I. In Rattus norvegicus (Rat), this protein is Evolutionarily conserved signaling intermediate in Toll pathway, mitochondrial.